The primary structure comprises 156 residues: Small ribosomal subunit protein uS7 (156 aa).

It belongs to the universal ribosomal protein uS7 family. As to quaternary structure, part of the 30S ribosomal subunit. Contacts proteins S9 and S11.

Functionally, one of the primary rRNA binding proteins, it binds directly to 16S rRNA where it nucleates assembly of the head domain of the 30S subunit. Is located at the subunit interface close to the decoding center, probably blocks exit of the E-site tRNA. This Clostridioides difficile (strain 630) (Peptoclostridium difficile) protein is Small ribosomal subunit protein uS7.